The sequence spans 402 residues: F-box protein At4g22390 (402 aa).

The F-box domain maps to 1–49 (MAECPTDLINEMFLRLRATTLVKCRVLSKPCFSLIDSPEFVSSHLRRRL).

This chain is F-box protein At4g22390, found in Arabidopsis thaliana (Mouse-ear cress).